The sequence spans 857 residues: Leucine--tRNA ligase (857 aa).

Positions 42 to 52 (PYPSGKLHMGH) match the 'HIGH' region motif. The 'KMSKS' region motif lies at 620-624 (KMSKS). K623 serves as a coordination point for ATP.

The protein belongs to the class-I aminoacyl-tRNA synthetase family.

Its subcellular location is the cytoplasm. The enzyme catalyses tRNA(Leu) + L-leucine + ATP = L-leucyl-tRNA(Leu) + AMP + diphosphate. The polypeptide is Leucine--tRNA ligase (Thiobacillus denitrificans (strain ATCC 25259 / T1)).